Here is a 345-residue protein sequence, read N- to C-terminus: 4-hydroxy-2-oxovalerate aldolase 3 (345 aa).

A Pyruvate carboxyltransferase domain is found at 8-260; the sequence is ITVHDMTLRD…ETGVDVWKIQ (253 aa). 16–17 is a substrate binding site; the sequence is RD. Asp17 is a Mn(2+) binding site. The Proton acceptor role is filled by His20. Substrate-binding residues include Ser170 and His199. The Mn(2+) site is built by His199 and His201. Tyr290 lines the substrate pocket.

The protein belongs to the 4-hydroxy-2-oxovalerate aldolase family.

It carries out the reaction (S)-4-hydroxy-2-oxopentanoate = acetaldehyde + pyruvate. The chain is 4-hydroxy-2-oxovalerate aldolase 3 (aphG) from Comamonas testosteroni (Pseudomonas testosteroni).